The sequence spans 737 residues: Polyribonucleotide nucleotidyltransferase (737 aa).

Mg(2+)-binding residues include Asp-489 and Asp-495. The 60-residue stretch at 556–615 (PKIDTIKIDVDKIKIVIGKGGETIDKIIAETGVKIDIDEEGNVSIYSSDQDAINRAKEII) folds into the KH domain. In terms of domain architecture, S1 motif spans 625 to 693 (DEVYRAKVVR…EKGRIDASMK (69 aa)). The tract at residues 691-737 (SMKALLPRPPKPEHDEKGEKSERPHRPRHHKDHKPKKEFTETPKDSE) is disordered. The span at 700–714 (PKPEHDEKGEKSERP) shows a compositional bias: basic and acidic residues. The span at 715–724 (HRPRHHKDHK) shows a compositional bias: basic residues. The span at 725-737 (PKKEFTETPKDSE) shows a compositional bias: basic and acidic residues.

It belongs to the polyribonucleotide nucleotidyltransferase family. The cofactor is Mg(2+).

It is found in the cytoplasm. It catalyses the reaction RNA(n+1) + phosphate = RNA(n) + a ribonucleoside 5'-diphosphate. Functionally, involved in mRNA degradation. Catalyzes the phosphorolysis of single-stranded polyribonucleotides processively in the 3'- to 5'-direction. This chain is Polyribonucleotide nucleotidyltransferase, found in Streptococcus pneumoniae (strain Taiwan19F-14).